Here is a 319-residue protein sequence, read N- to C-terminus: MINHGKNIKIFTGNSYPSLAEEIADIIGVQVGDSRVGKFSNGETAVDINETVRGTDLFLIQTLCEPVNDSIMELLIMLDAFKRASAGRITAVIPNYAYARQDRKAKARQPITAKLMADLIHTAGADRVLTMDLHAPQIQGFFDIPVDHLEGVPILAKYFINQNSNTDDLIVVSPDIGGVKRTRKFAEKLHAPIAIIDKRRPKPNVSEVMSIIGDVKGKKAILVDDMIDTAGSIVNAAEALVKMGAKEVSACCTHGVLSGPAIERLENSPLKEVVILNTIPIEGDKRIDKIKVLSVAPIFAEAIRRIYEDMPVSKIFQEE.

ATP contacts are provided by residues 41–43 (NGE) and 100–101 (RQ). Mg(2+) contacts are provided by His134 and Asp175. Residue Lys198 is part of the active site. D-ribose 5-phosphate is bound by residues Arg200, Asp224, and 228-232 (DTAGS).

The protein belongs to the ribose-phosphate pyrophosphokinase family. Class I subfamily. Homohexamer. It depends on Mg(2+) as a cofactor.

It localises to the cytoplasm. It carries out the reaction D-ribose 5-phosphate + ATP = 5-phospho-alpha-D-ribose 1-diphosphate + AMP + H(+). It participates in metabolic intermediate biosynthesis; 5-phospho-alpha-D-ribose 1-diphosphate biosynthesis; 5-phospho-alpha-D-ribose 1-diphosphate from D-ribose 5-phosphate (route I): step 1/1. Involved in the biosynthesis of the central metabolite phospho-alpha-D-ribosyl-1-pyrophosphate (PRPP) via the transfer of pyrophosphoryl group from ATP to 1-hydroxyl of ribose-5-phosphate (Rib-5-P). This is Ribose-phosphate pyrophosphokinase from Clostridium acetobutylicum (strain ATCC 824 / DSM 792 / JCM 1419 / IAM 19013 / LMG 5710 / NBRC 13948 / NRRL B-527 / VKM B-1787 / 2291 / W).